Here is a 183-residue protein sequence, read N- to C-terminus: CKLF-like MARVEL transmembrane domain-containing protein 6 (183 aa).

An N-acetylmethionine modification is found at methionine 1. The Cytoplasmic segment spans residues 1–39; it reads MENGAVYSPTTEEDPGPARGPRSGLAAYFFMGRLPLLRR. Residue serine 8 is modified to Phosphoserine. In terms of domain architecture, MARVEL spans 33–160; it reads RLPLLRRVLK…DFITMLYEKR (128 aa). The chain crosses the membrane as a helical span at residues 40–60; sequence VLKGLQLLLSLLAFICEEVVS. Topologically, residues 61 to 67 are extracellular; that stretch reads QCTLCGG. The chain crosses the membrane as a helical span at residues 68–88; it reads LYFFEFVSCSAFLLSLLILIV. At 89–106 the chain is on the cytoplasmic side; the sequence is YCTPFYERVDTTKVKSSD. Residues 107 to 127 traverse the membrane as a helical segment; that stretch reads FYITLGTGCVFLLASIIFVST. Topologically, residues 128 to 134 are extracellular; that stretch reads HDRTSAE. The helical transmembrane segment at 135–155 threads the bilayer; it reads IAAIVFGFIASFMFLLDFITM. Topologically, residues 156-183 are cytoplasmic; sequence LYEKRQESQLRKPENTTRAEALTEPLNA. At threonine 171 the chain carries Phosphothreonine.

The protein belongs to the chemokine-like factor family. Interacts with PD-L1/CD274 (via transmembrane domain); the interaction is direct. Interacts with CMTM4. Interacts with CD58, ARG1, ENO1 and TMPO. As to expression, expressed in the leukocytes, placenta and testis.

The protein localises to the cell membrane. The protein resides in the early endosome membrane. It is found in the recycling endosome membrane. Master regulator of recycling and plasma membrane expression of PD-L1/CD274, an immune inhibitory ligand critical for immune tolerance to self and antitumor immunity. Associates with both constitutive and IFNG-induced PD-L1/CD274 at recycling endosomes, where it protects PD-L1/CD274 from being targeted for lysosomal degradation, likely by preventing its STUB1-mediated ubiquitination. May stabilize PD-L1/CD274 expression on antigen presenting cells and potentiates inhibitory signaling by PDCD1/CD279, its receptor on T-cells, ultimately triggering T-cell anergy. The protein is CKLF-like MARVEL transmembrane domain-containing protein 6 of Homo sapiens (Human).